Here is a 421-residue protein sequence, read N- to C-terminus: Serine hydroxymethyltransferase (421 aa).

(6S)-5,6,7,8-tetrahydrofolate contacts are provided by residues Leu-121 and 125-127 (GHL). Lys-229 is modified (N6-(pyridoxal phosphate)lysine).

Belongs to the SHMT family. In terms of assembly, homodimer. Pyridoxal 5'-phosphate serves as cofactor.

It localises to the cytoplasm. It catalyses the reaction (6R)-5,10-methylene-5,6,7,8-tetrahydrofolate + glycine + H2O = (6S)-5,6,7,8-tetrahydrofolate + L-serine. It functions in the pathway one-carbon metabolism; tetrahydrofolate interconversion. It participates in amino-acid biosynthesis; glycine biosynthesis; glycine from L-serine: step 1/1. Catalyzes the reversible interconversion of serine and glycine with tetrahydrofolate (THF) serving as the one-carbon carrier. This reaction serves as the major source of one-carbon groups required for the biosynthesis of purines, thymidylate, methionine, and other important biomolecules. Also exhibits THF-independent aldolase activity toward beta-hydroxyamino acids, producing glycine and aldehydes, via a retro-aldol mechanism. This chain is Serine hydroxymethyltransferase, found in Haemophilus influenzae (strain 86-028NP).